Consider the following 284-residue polypeptide: 2-dehydro-3-deoxyphosphooctonate aldolase (284 aa).

This sequence belongs to the KdsA family.

It localises to the cytoplasm. The catalysed reaction is D-arabinose 5-phosphate + phosphoenolpyruvate + H2O = 3-deoxy-alpha-D-manno-2-octulosonate-8-phosphate + phosphate. Its pathway is carbohydrate biosynthesis; 3-deoxy-D-manno-octulosonate biosynthesis; 3-deoxy-D-manno-octulosonate from D-ribulose 5-phosphate: step 2/3. It participates in bacterial outer membrane biogenesis; lipopolysaccharide biosynthesis. The sequence is that of 2-dehydro-3-deoxyphosphooctonate aldolase from Vibrio vulnificus (strain CMCP6).